Here is a 142-residue protein sequence, read N- to C-terminus: Large ribosomal subunit protein uL11 (142 aa).

It belongs to the universal ribosomal protein uL11 family. As to quaternary structure, part of the ribosomal stalk of the 50S ribosomal subunit. Interacts with L10 and the large rRNA to form the base of the stalk. L10 forms an elongated spine to which L12 dimers bind in a sequential fashion forming a multimeric L10(L12)X complex. One or more lysine residues are methylated.

Functionally, forms part of the ribosomal stalk which helps the ribosome interact with GTP-bound translation factors. This chain is Large ribosomal subunit protein uL11, found in Actinobacillus succinogenes (strain ATCC 55618 / DSM 22257 / CCUG 43843 / 130Z).